The primary structure comprises 428 residues: ATP-dependent RNA helicase RhlB (428 aa).

The Q motif signature appears at 9 to 37 (QKFSDFALHPLVVEALENKGFQYCTPIQA). The Helicase ATP-binding domain occupies 40 to 219 (LPLTLSGRDV…FEQMNNAEYV (180 aa)). Position 53–60 (53–60 (AQTGTGKT)) interacts with ATP. Residues 165–168 (DEAD) carry the DEAD box motif. One can recognise a Helicase C-terminal domain in the interval 245 to 390 (RLLQTLIEEE…VSKYNSDALL (146 aa)). A disordered region spans residues 394–428 (PAPKRLARTRTGNGPRRNSAPRRSGAPRNNRKRPG).

It belongs to the DEAD box helicase family. RhlB subfamily. In terms of assembly, component of the RNA degradosome, which is a multiprotein complex involved in RNA processing and mRNA degradation.

It localises to the cytoplasm. The enzyme catalyses ATP + H2O = ADP + phosphate + H(+). Its function is as follows. DEAD-box RNA helicase involved in RNA degradation. Has RNA-dependent ATPase activity and unwinds double-stranded RNA. The polypeptide is ATP-dependent RNA helicase RhlB (Yersinia pseudotuberculosis serotype O:1b (strain IP 31758)).